The chain runs to 423 residues: Enolase (423 aa).

Q162 provides a ligand contact to (2R)-2-phosphoglycerate. The active-site Proton donor is E204. Mg(2+)-binding residues include D241, E284, and D311. K336, R365, S366, and K387 together coordinate (2R)-2-phosphoglycerate. K336 serves as the catalytic Proton acceptor.

It belongs to the enolase family. It depends on Mg(2+) as a cofactor.

The protein localises to the cytoplasm. Its subcellular location is the secreted. It localises to the cell surface. It carries out the reaction (2R)-2-phosphoglycerate = phosphoenolpyruvate + H2O. It functions in the pathway carbohydrate degradation; glycolysis; pyruvate from D-glyceraldehyde 3-phosphate: step 4/5. Functionally, catalyzes the reversible conversion of 2-phosphoglycerate (2-PG) into phosphoenolpyruvate (PEP). It is essential for the degradation of carbohydrates via glycolysis. This is Enolase from Bartonella bacilliformis (strain ATCC 35685 / KC583 / Herrer 020/F12,63).